Here is a 383-residue protein sequence, read N- to C-terminus: uncharacterized protein (383 aa).

Belongs to the peptidase M20 family.

This is an uncharacterized protein from Staphylococcus epidermidis (strain ATCC 35984 / DSM 28319 / BCRC 17069 / CCUG 31568 / BM 3577 / RP62A).